The following is a 201-amino-acid chain: NADH-ubiquinone oxidoreductase 21.3 kDa subunit (201 aa).

Complex I is composed of about 40 different subunits.

It localises to the mitochondrion inner membrane. It carries out the reaction a ubiquinone + NADH + 5 H(+)(in) = a ubiquinol + NAD(+) + 4 H(+)(out). In terms of biological role, transfer of electrons from NADH to the respiratory chain. The immediate electron acceptor for the enzyme is believed to be ubiquinone. The protein is NADH-ubiquinone oxidoreductase 21.3 kDa subunit of Neurospora crassa (strain ATCC 24698 / 74-OR23-1A / CBS 708.71 / DSM 1257 / FGSC 987).